Reading from the N-terminus, the 187-residue chain is UPF0301 protein Cpar_0662 (187 aa).

Belongs to the UPF0301 (AlgH) family.

The polypeptide is UPF0301 protein Cpar_0662 (Chlorobaculum parvum (strain DSM 263 / NCIMB 8327) (Chlorobium vibrioforme subsp. thiosulfatophilum)).